The sequence spans 208 residues: Somatotropin-B (208 aa).

A signal peptide spans 1 to 25 (MVPGSCSSFGLLVILSFQNVPDVGG). H44 is a binding site for Zn(2+). C77 and C181 are joined by a disulfide. E190 is a binding site for Zn(2+). C198 and C206 form a disulfide bridge.

This sequence belongs to the somatotropin/prolactin family.

The protein resides in the secreted. Growth hormone plays an important role in growth control. This Xenopus laevis (African clawed frog) protein is Somatotropin-B (gh-b).